A 141-amino-acid chain; its full sequence is ATP synthase epsilon chain (141 aa).

The protein belongs to the ATPase epsilon chain family. In terms of assembly, F-type ATPases have 2 components, CF(1) - the catalytic core - and CF(0) - the membrane proton channel. CF(1) has five subunits: alpha(3), beta(3), gamma(1), delta(1), epsilon(1). CF(0) has three main subunits: a, b and c.

It is found in the cell inner membrane. Produces ATP from ADP in the presence of a proton gradient across the membrane. This Burkholderia multivorans (strain ATCC 17616 / 249) protein is ATP synthase epsilon chain.